The chain runs to 630 residues: Biosynthetic arginine decarboxylase (630 aa).

The residue at position 99 (Lys-99) is an N6-(pyridoxal phosphate)lysine. Position 281–291 (281–291) interacts with substrate; the sequence is VDIGGGLGVDY.

Belongs to the Orn/Lys/Arg decarboxylase class-II family. SpeA subfamily. Mg(2+) is required as a cofactor. Pyridoxal 5'-phosphate serves as cofactor.

It catalyses the reaction L-arginine + H(+) = agmatine + CO2. In terms of biological role, catalyzes the biosynthesis of agmatine from arginine. This Bacteroides thetaiotaomicron (strain ATCC 29148 / DSM 2079 / JCM 5827 / CCUG 10774 / NCTC 10582 / VPI-5482 / E50) protein is Biosynthetic arginine decarboxylase.